The primary structure comprises 292 residues: Ribosomal RNA small subunit methyltransferase A (292 aa).

S-adenosyl-L-methionine contacts are provided by N28, L30, G55, E76, D101, and N126.

Belongs to the class I-like SAM-binding methyltransferase superfamily. rRNA adenine N(6)-methyltransferase family. RsmA subfamily.

Its subcellular location is the cytoplasm. The enzyme catalyses adenosine(1518)/adenosine(1519) in 16S rRNA + 4 S-adenosyl-L-methionine = N(6)-dimethyladenosine(1518)/N(6)-dimethyladenosine(1519) in 16S rRNA + 4 S-adenosyl-L-homocysteine + 4 H(+). Its function is as follows. Specifically dimethylates two adjacent adenosines (A1518 and A1519) in the loop of a conserved hairpin near the 3'-end of 16S rRNA in the 30S particle. May play a critical role in biogenesis of 30S subunits. This chain is Ribosomal RNA small subunit methyltransferase A, found in Bacillus anthracis.